The chain runs to 425 residues: Serine--tRNA ligase (425 aa).

Residue 230 to 232 (TAE) coordinates L-serine. 261-263 (RSE) provides a ligand contact to ATP. Glu284 serves as a coordination point for L-serine. 348 to 351 (EISS) provides a ligand contact to ATP. L-serine is bound at residue Ser384.

This sequence belongs to the class-II aminoacyl-tRNA synthetase family. Type-1 seryl-tRNA synthetase subfamily. Homodimer. The tRNA molecule binds across the dimer.

The protein resides in the cytoplasm. The enzyme catalyses tRNA(Ser) + L-serine + ATP = L-seryl-tRNA(Ser) + AMP + diphosphate + H(+). It catalyses the reaction tRNA(Sec) + L-serine + ATP = L-seryl-tRNA(Sec) + AMP + diphosphate + H(+). Its pathway is aminoacyl-tRNA biosynthesis; selenocysteinyl-tRNA(Sec) biosynthesis; L-seryl-tRNA(Sec) from L-serine and tRNA(Sec): step 1/1. In terms of biological role, catalyzes the attachment of serine to tRNA(Ser). Is also able to aminoacylate tRNA(Sec) with serine, to form the misacylated tRNA L-seryl-tRNA(Sec), which will be further converted into selenocysteinyl-tRNA(Sec). This is Serine--tRNA ligase from Streptococcus sanguinis (strain SK36).